The following is a 378-amino-acid chain: Chorismate synthase (378 aa).

Residue Arg-50 participates in NADP(+) binding. FMN-binding positions include 127–129 (RAS), 255–256 (NA), Gly-300, 315–319 (KPTPS), and Arg-342.

Belongs to the chorismate synthase family. FMNH2 is required as a cofactor.

The enzyme catalyses 5-O-(1-carboxyvinyl)-3-phosphoshikimate = chorismate + phosphate. The protein operates within metabolic intermediate biosynthesis; chorismate biosynthesis; chorismate from D-erythrose 4-phosphate and phosphoenolpyruvate: step 7/7. In terms of biological role, catalyzes the anti-1,4-elimination of the C-3 phosphate and the C-6 proR hydrogen from 5-enolpyruvylshikimate-3-phosphate (EPSP) to yield chorismate, which is the branch point compound that serves as the starting substrate for the three terminal pathways of aromatic amino acid biosynthesis. This reaction introduces a second double bond into the aromatic ring system. The polypeptide is Chorismate synthase (Methanocaldococcus jannaschii (strain ATCC 43067 / DSM 2661 / JAL-1 / JCM 10045 / NBRC 100440) (Methanococcus jannaschii)).